The primary structure comprises 30 residues: MKFNNAGAQGRDRGYIYSEPEFGRTRQVFY.

This is an uncharacterized protein from Dictyostelium discoideum (Social amoeba).